A 543-amino-acid polypeptide reads, in one-letter code: Chaperonin GroEL 2 (543 aa).

ATP is bound by residues 29–32, 86–90, glycine 413, and aspartate 495; these read TLGP and DGTTT. Residues 524-543 form a disordered region; that stretch reads KPEPKENAPTGAGMGGDFDY.

Belongs to the chaperonin (HSP60) family. As to quaternary structure, forms a cylinder of 14 subunits composed of two heptameric rings stacked back-to-back. Interacts with the co-chaperonin GroES.

The protein localises to the cytoplasm. It carries out the reaction ATP + H2O + a folded polypeptide = ADP + phosphate + an unfolded polypeptide.. Functionally, together with its co-chaperonin GroES, plays an essential role in assisting protein folding. The GroEL-GroES system forms a nano-cage that allows encapsulation of the non-native substrate proteins and provides a physical environment optimized to promote and accelerate protein folding. In Acaryochloris marina (strain MBIC 11017), this protein is Chaperonin GroEL 2.